The chain runs to 372 residues: Peroxisomal biogenesis factor 3 (372 aa).

Over 1–15 the chain is Cytoplasmic; the sequence is MLRSMWNFLKRHKKK. Positions 1–45 are targeting to peroxisomes; it reads MLRSMWNFLKRHKKKCIFLGTVLGGVYILGKYGQKKIREIQEREA. The helical transmembrane segment at 16–36 threads the bilayer; sequence CIFLGTVLGGVYILGKYGQKK. Residues 37 to 116 lie on the Peroxisomal side of the membrane; sequence IREIQEREAA…LKIISFTRSI (80 aa). The chain crosses the membrane as a helical span at residues 117-140; the sequence is VAVYSTCMLVVLLRVQLNIIGGYI. The interval 120–136 is interaction with PEX19; the sequence is YSTCMLVVLLRVQLNII. The Cytoplasmic portion of the chain corresponds to 141–372; that stretch reads YLDNATVGKN…AFSTPQQLEK (232 aa).

Belongs to the peroxin-3 family. As to quaternary structure, interacts with PEX19. As to expression, identified in all tissues analyzed, with the strongest expression in liver and in testis.

Its subcellular location is the peroxisome membrane. Functionally, involved in peroxisome biosynthesis and integrity. Assembles membrane vesicles before the matrix proteins are translocated. As a docking factor for PEX19, is necessary for the import of peroxisomal membrane proteins in the peroxisomes. The polypeptide is Peroxisomal biogenesis factor 3 (Pex3) (Mus musculus (Mouse)).